Here is an 89-residue protein sequence, read N- to C-terminus: UPF0335 protein Nwi_0989 (89 aa).

It belongs to the UPF0335 family.

In Nitrobacter winogradskyi (strain ATCC 25391 / DSM 10237 / CIP 104748 / NCIMB 11846 / Nb-255), this protein is UPF0335 protein Nwi_0989.